Here is a 162-residue protein sequence, read N- to C-terminus: MDKKINPKKVEMFNSLKEFLDGKDNIFFLDYRGLTVAELTKLRSRVEDEKGALKVVKNNIMKRVLKDKDIEGLDSYLLGPTAVVTAFDEANVIAKIFYEFVKTTTLKVKGGFVLGEVYDESKLSAYSKLPTKIESISLFMSVLKAPMSKLVRTLKALSDIKV.

The protein belongs to the universal ribosomal protein uL10 family. As to quaternary structure, part of the ribosomal stalk of the 50S ribosomal subunit. The N-terminus interacts with L11 and the large rRNA to form the base of the stalk. The C-terminus forms an elongated spine to which L12 dimers bind in a sequential fashion forming a multimeric L10(L12)X complex.

Its function is as follows. Forms part of the ribosomal stalk, playing a central role in the interaction of the ribosome with GTP-bound translation factors. This chain is Large ribosomal subunit protein uL10, found in Borrelia recurrentis (strain A1).